The primary structure comprises 371 residues: tRNA 2-selenouridine synthase (371 aa).

One can recognise a Rhodanese domain in the interval 14 to 137 (FLDDVPLIDL…MRRFLIDTLD (124 aa)). C97 functions as the S-selanylcysteine intermediate in the catalytic mechanism.

This sequence belongs to the SelU family. In terms of assembly, monomer.

The catalysed reaction is 5-methylaminomethyl-2-thiouridine(34) in tRNA + selenophosphate + (2E)-geranyl diphosphate + H2O + H(+) = 5-methylaminomethyl-2-selenouridine(34) in tRNA + (2E)-thiogeraniol + phosphate + diphosphate. It catalyses the reaction 5-methylaminomethyl-2-thiouridine(34) in tRNA + (2E)-geranyl diphosphate = 5-methylaminomethyl-S-(2E)-geranyl-thiouridine(34) in tRNA + diphosphate. It carries out the reaction 5-methylaminomethyl-S-(2E)-geranyl-thiouridine(34) in tRNA + selenophosphate + H(+) = 5-methylaminomethyl-2-(Se-phospho)selenouridine(34) in tRNA + (2E)-thiogeraniol. The enzyme catalyses 5-methylaminomethyl-2-(Se-phospho)selenouridine(34) in tRNA + H2O = 5-methylaminomethyl-2-selenouridine(34) in tRNA + phosphate. Involved in the post-transcriptional modification of the uridine at the wobble position (U34) of tRNA(Lys), tRNA(Glu) and tRNA(Gln). Catalyzes the conversion of 2-thiouridine (S2U-RNA) to 2-selenouridine (Se2U-RNA). Acts in a two-step process involving geranylation of 2-thiouridine (S2U) to S-geranyl-2-thiouridine (geS2U) and subsequent selenation of the latter derivative to 2-selenouridine (Se2U) in the tRNA chain. This Aeromonas salmonicida (strain A449) protein is tRNA 2-selenouridine synthase.